Here is a 793-residue protein sequence, read N- to C-terminus: Flavin carrier protein 1 (793 aa).

Residues 1–21 (MQVLVTLWCLICTCLVLPVAA) form the signal peptide. The Lumenal segment spans residues 22–163 (KKRTLTASSL…FFSNGKTVSQ (142 aa)). N-linked (GlcNAc...) asparagine glycosylation is present at Asn143. Residues 164-184 (IGVKWVTAVIAGIGLLTSAVL) traverse the membrane as a helical segment. Residues 185–194 (STFGNSTAAS) lie on the Cytoplasmic side of the membrane. The helical transmembrane segment at 195-215 (HISANTMSLFLYFQSVAVVAM) threads the bilayer. Residues 216-223 (QHVDSVPP) are Lumenal-facing. A helical transmembrane segment spans residues 224 to 244 (IAAAWSENLAWSMGLIRITFM). At 245–249 (QKIFR) the chain is on the cytoplasmic side. Residues 250–272 (WYVEATGGSASLYLTATTMSVLT) traverse the membrane as a helical segment. Residues 273–317 (QRGLDYLKNTSVYKRAENVLYGNSNTLIFRGIKRMGYRMKIENTA) are Lumenal-facing. The N-linked (GlcNAc...) asparagine glycan is linked to Asn281. The helical transmembrane segment at 318-338 (IVCTGFTFFVLCGYFLAGFIM) threads the bilayer. Over 339-372 (ACKYSIELCIRCGWMRSDRFYQFRKNWRSVLKGS) the chain is Cytoplasmic. The helical transmembrane segment at 373–393 (LLRYIYIGFTQLTILSFWEFT) threads the bilayer. Residues 394–397 (ERDS) lie on the Lumenal side of the membrane. Residues 398–418 (AGVIVIACLFIVLSCGLMAWA) traverse the membrane as a helical segment. Residues 419 to 461 (AYRTIFFASKSVEMYNNPAALLYGDEYVLNKYGFFYTMFNAKH) are Cytoplasmic-facing. The helical transmembrane segment at 462–482 (YWWNALLTTYILVKALFVGFA) threads the bilayer. Residues 483–484 (QA) are Lumenal-facing. Residues 485-505 (SGKTQALAIFIIDLAYFVAII) traverse the membrane as a helical segment. Over 506–516 (RYKPYLDRPTN) the chain is Cytoplasmic. A helical membrane pass occupies residues 517–537 (IVNIFICTVTLVNSFLFMFFS). The Lumenal portion of the chain corresponds to 538–551 (NLFNQKYAVSAIMG). A helical membrane pass occupies residues 552-572 (WVFFIMNAAFSLLLLLMILAF). The Cytoplasmic portion of the chain corresponds to 573 to 793 (TTIILFSKNP…KANILDPDYL (221 aa)). Ser610 carries the phosphoserine modification. Thr626 carries the post-translational modification Phosphothreonine. 2 disordered regions span residues 649–674 (YDDE…PTFS) and 689–731 (KLGS…QESE). Residues 701–719 (ITQQEVSPDRASSSPNSKS) are compositionally biased toward polar residues. 2 positions are modified to phosphoserine: Ser771 and Ser774.

The protein belongs to the transient receptor potential (TRP) ion channel family.

Its subcellular location is the endoplasmic reticulum membrane. May be responsible for the transport of FAD into the endoplasmic reticulum lumen, where it is required for oxidative protein folding. The chain is Flavin carrier protein 1 (FLC1) from Saccharomyces cerevisiae (strain ATCC 204508 / S288c) (Baker's yeast).